A 25-amino-acid chain; its full sequence is Caerin-1.2 (25 aa).

At L25 the chain carries Leucine amide.

Expressed by the skin parotoid and/or rostral glands.

It localises to the secreted. Its function is as follows. Antibacterial peptide, that adopts an alpha helical conformation which can disrupt bacterial membranes. Each caerin displays a different antimicrobial specificity. The polypeptide is Caerin-1.2 (Ranoidea caerulea (Green tree frog)).